A 240-amino-acid polypeptide reads, in one-letter code: RxLR effector protein PexRD20 (240 aa).

Residues Met1–Ala23 form the signal peptide. A RxLR-dEER motif is present at residues Arg43–Arg58.

It belongs to the RxLR effector family.

The protein localises to the secreted. The protein resides in the host cytoplasm. It is found in the host nucleus. Its subcellular location is the host nucleolus. In terms of biological role, effector that enhances P.infestans colonization of Nicotiana benthamiana leaves. In Phytophthora infestans (strain T30-4) (Potato late blight agent), this protein is RxLR effector protein PexRD20.